A 130-amino-acid chain; its full sequence is Transcription antitermination protein NusB (130 aa).

This sequence belongs to the NusB family.

Its function is as follows. Involved in transcription antitermination. Required for transcription of ribosomal RNA (rRNA) genes. Binds specifically to the boxA antiterminator sequence of the ribosomal RNA (rrn) operons. The polypeptide is Transcription antitermination protein NusB (Geobacillus kaustophilus (strain HTA426)).